The sequence spans 294 residues: 4-hydroxy-tetrahydrodipicolinate synthase (294 aa).

S47 lines the pyruvate pocket. The active-site Proton donor/acceptor is the Y135. Residue K163 is the Schiff-base intermediate with substrate of the active site. Residue I205 participates in pyruvate binding.

Belongs to the DapA family. As to quaternary structure, homotetramer; dimer of dimers.

The protein localises to the cytoplasm. The catalysed reaction is L-aspartate 4-semialdehyde + pyruvate = (2S,4S)-4-hydroxy-2,3,4,5-tetrahydrodipicolinate + H2O + H(+). Its pathway is amino-acid biosynthesis; L-lysine biosynthesis via DAP pathway; (S)-tetrahydrodipicolinate from L-aspartate: step 3/4. Functionally, catalyzes the condensation of (S)-aspartate-beta-semialdehyde [(S)-ASA] and pyruvate to 4-hydroxy-tetrahydrodipicolinate (HTPA). This is 4-hydroxy-tetrahydrodipicolinate synthase from Ralstonia nicotianae (strain ATCC BAA-1114 / GMI1000) (Ralstonia solanacearum).